The following is a 638-amino-acid chain: 9-cis-epoxycarotenoid dioxygenase NCED1, chloroplastic (638 aa).

A chloroplast-targeting transit peptide spans 1–80 (MQRICPAHCS…QTEQEDEQLV (80 aa)). Composition is skewed to low complexity over residues 28 to 37 (AASAAPQSPS), 44 to 69 (ASAAPPSAAASTTVLTSPLVTTTRTP), and 92 to 102 (TTNGRAAPSQS). Disordered stretches follow at residues 28–80 (AASA…EQLV) and 92–113 (TTNGRAAPSQSRPRRRPAPAAA). Residues His-331, His-380, His-446, and His-624 each contribute to the Fe cation site.

Belongs to the carotenoid oxygenase family. Fe(2+) serves as cofactor.

It localises to the plastid. The protein localises to the chloroplast. The enzyme catalyses a 9-cis-epoxycarotenoid + O2 = a 12'-apo-carotenal + 2-cis,4-trans-xanthoxin. It carries out the reaction 9-cis-violaxanthin + O2 = (3S,5R,6S)-5,6-epoxy-3-hydroxy-5,6-dihydro-12'-apo-beta-caroten-12'-al + 2-cis,4-trans-xanthoxin. It catalyses the reaction 9'-cis-neoxanthin + O2 = (3S,5R,6R)-3,5-dihydroxy-6,7-didehydro-5,6-dihydro-12'-apo-beta-caroten-12'-al + 2-cis,4-trans-xanthoxin. Has a 11,12(11',12') 9-cis epoxycarotenoid cleavage activity. Catalyzes the first step of abscisic-acid biosynthesis from carotenoids. The chain is 9-cis-epoxycarotenoid dioxygenase NCED1, chloroplastic from Oryza sativa subsp. japonica (Rice).